Reading from the N-terminus, the 161-residue chain is Regulator of ribonuclease activity A (161 aa).

This sequence belongs to the RraA family. As to quaternary structure, homotrimer. Binds to both RNA-binding sites in the C-terminal region of Rne and to RhlB.

The protein localises to the cytoplasm. Its function is as follows. Globally modulates RNA abundance by binding to RNase E (Rne) and regulating its endonucleolytic activity. Can modulate Rne action in a substrate-dependent manner by altering the composition of the degradosome. Modulates RNA-binding and helicase activities of the degradosome. The protein is Regulator of ribonuclease activity A of Shewanella oneidensis (strain ATCC 700550 / JCM 31522 / CIP 106686 / LMG 19005 / NCIMB 14063 / MR-1).